The primary structure comprises 129 residues: Holo-[acyl-carrier-protein] synthase (129 aa).

2 residues coordinate Mg(2+): aspartate 8 and glutamate 58.

It belongs to the P-Pant transferase superfamily. AcpS family. Mg(2+) is required as a cofactor.

The protein resides in the cytoplasm. The enzyme catalyses apo-[ACP] + CoA = holo-[ACP] + adenosine 3',5'-bisphosphate + H(+). In terms of biological role, transfers the 4'-phosphopantetheine moiety from coenzyme A to a Ser of acyl-carrier-protein. This is Holo-[acyl-carrier-protein] synthase from Geobacillus kaustophilus (strain HTA426).